We begin with the raw amino-acid sequence, 144 residues long: Large ribosomal subunit protein uL13 (144 aa).

Belongs to the universal ribosomal protein uL13 family. As to quaternary structure, part of the 50S ribosomal subunit.

Its function is as follows. This protein is one of the early assembly proteins of the 50S ribosomal subunit, although it is not seen to bind rRNA by itself. It is important during the early stages of 50S assembly. This Clostridium perfringens (strain 13 / Type A) protein is Large ribosomal subunit protein uL13.